The following is a 127-amino-acid chain: MSTPKDLRYSEEHEWVKVEGEKVRIGITHFAQSELGDIVFVELPEVGDKITADEPFGSVESVKTVSELYAPINGTIVEVNDELDDSPEFVNDSPYEKAWMIVVEPADTSEIENLMTAEQYEEMTKED.

In terms of domain architecture, Lipoyl-binding spans Lys22–Glu104. Lys63 bears the N6-lipoyllysine mark.

The protein belongs to the GcvH family. In terms of assembly, the glycine cleavage system is composed of four proteins: P, T, L and H. The cofactor is (R)-lipoate.

Its function is as follows. The glycine cleavage system catalyzes the degradation of glycine. The H protein shuttles the methylamine group of glycine from the P protein to the T protein. In terms of biological role, is also involved in protein lipoylation via its role as an octanoyl/lipoyl carrier protein intermediate. This is Glycine cleavage system H protein from Bacillus pumilus (strain SAFR-032).